The sequence spans 916 residues: Rab3 GTPase-activating protein catalytic subunit (916 aa).

The tract at residues 530-574 (NSKRKSEGMVGKASSEEEEDEDDDEGEFFDCDDLTAGAGSPTKAV) is disordered. Residues Ser543 and Ser544 each carry the phosphoserine modification. Acidic residues predominate over residues 545–562 (EEEEDEDDDEGEFFDCDD).

It belongs to the Rab3-GAP catalytic subunit family. As to quaternary structure, the Rab3 GTPase-activating complex is a heterodimer composed of Rab3GAP1 and Rab3-GAP.

It is found in the cytoplasm. Catalytic subunit of the Rab3 GTPase-activating (Rab3GAP) complex composed of Rab3-GAP and Rab3GAP1, which has both GTPase-activating protein (GAP) activity towards Rab3, and guanine nucleotide exchange factor (GEF) activity towards Rab18. As part of the Rab3GAP complex, required for the rapid induction and sustained expression of synaptic homeostasis at the neuromuscular junction (NMJ). Also participates in the regulation of autophagy in tissues such as larval fat cells and adult muscles. The Rab3GAP complex, acts as a GAP for Rab3 by converting active Rab3-GTP to the inactive form Rab3-GDP. At the neuromuscular junction (NMJ), forms a presynaptic signaling mechanism with Rab3 that regulates progression of synaptic homeostasis at a late stage of vesicle release. Within this mechanism Rab3-GTP acts, directly or indirectly, to inhibit the progression of synaptic homeostasis, and Rab3-GAP functions to inactivate this action of Rab3-GTP. The Rab3GAP complex, acts as a GEF for Rab18 by promoting the conversion of inactive Rab18-GDP to the active form Rab18-GTP. Regulates autophagy as part of a Rab3GAP-Rab18 module. Once Rab18 is activated by the GEF Rab3GAP complex, the Rab3GAP-Rab18 module localizes to autophagosomes, and regulates autolysosome formation and maturation together with the Rab18 interacting effector, the PI3K/Vps34 Complex I. The protein is Rab3 GTPase-activating protein catalytic subunit of Drosophila melanogaster (Fruit fly).